The chain runs to 452 residues: Chromosomal replication initiator protein DnaA (452 aa).

Residues 1-84 (MTENEQIFWN…SIEYVFEETQ (84 aa)) are domain I, interacts with DnaA modulators. Positions 84–110 (QSTSNSPQISQNKTAELATETLPFVQN) are domain II. The interval 111-329 (DLNPKYSFDN…GALKDISLVA (219 aa)) is domain III, AAA+ region. 4 residues coordinate ATP: Gly155, Gly157, Lys158, and Thr159. The tract at residues 330–452 (NFKKLDVITV…EMETIKNKIK (123 aa)) is domain IV, binds dsDNA.

It belongs to the DnaA family. As to quaternary structure, oligomerizes as a right-handed, spiral filament on DNA at oriC.

Its subcellular location is the cytoplasm. Plays an essential role in the initiation and regulation of chromosomal replication. ATP-DnaA binds to the origin of replication (oriC) to initiate formation of the DNA replication initiation complex once per cell cycle. Binds the DnaA box (a 9 base pair repeat at the origin) and separates the double-stranded (ds)DNA. Forms a right-handed helical filament on oriC DNA; dsDNA binds to the exterior of the filament while single-stranded (ss)DNA is stabiized in the filament's interior. The ATP-DnaA-oriC complex binds and stabilizes one strand of the AT-rich DNA unwinding element (DUE), permitting loading of DNA polymerase. After initiation quickly degrades to an ADP-DnaA complex that is not apt for DNA replication. Binds acidic phospholipids. The sequence is that of Chromosomal replication initiator protein DnaA from Streptococcus mutans serotype c (strain ATCC 700610 / UA159).